We begin with the raw amino-acid sequence, 340 residues long: Ketol-acid reductoisomerase (NADP(+)) (340 aa).

One can recognise a KARI N-terminal Rossmann domain in the interval 3 to 183 (VNIYYDKDCD…GGGRTGIIET (181 aa)). NADP(+) contacts are provided by residues 26-29 (FGSQ), Ser54, and 84-87 (DELQ). Residue His109 is part of the active site. Gly135 is a binding site for NADP(+). A KARI C-terminal knotted domain is found at 184-329 (TFKDETETDL…KKLRAMMPWI (146 aa)). 4 residues coordinate Mg(2+): Asp192, Glu196, Glu228, and Glu232. Ser253 contributes to the substrate binding site.

The protein belongs to the ketol-acid reductoisomerase family. It depends on Mg(2+) as a cofactor.

The enzyme catalyses (2R)-2,3-dihydroxy-3-methylbutanoate + NADP(+) = (2S)-2-acetolactate + NADPH + H(+). The catalysed reaction is (2R,3R)-2,3-dihydroxy-3-methylpentanoate + NADP(+) = (S)-2-ethyl-2-hydroxy-3-oxobutanoate + NADPH + H(+). Its pathway is amino-acid biosynthesis; L-isoleucine biosynthesis; L-isoleucine from 2-oxobutanoate: step 2/4. It functions in the pathway amino-acid biosynthesis; L-valine biosynthesis; L-valine from pyruvate: step 2/4. Functionally, involved in the biosynthesis of branched-chain amino acids (BCAA). Catalyzes an alkyl-migration followed by a ketol-acid reduction of (S)-2-acetolactate (S2AL) to yield (R)-2,3-dihydroxy-isovalerate. In the isomerase reaction, S2AL is rearranged via a Mg-dependent methyl migration to produce 3-hydroxy-3-methyl-2-ketobutyrate (HMKB). In the reductase reaction, this 2-ketoacid undergoes a metal-dependent reduction by NADPH to yield (R)-2,3-dihydroxy-isovalerate. This Campylobacter curvus (strain 525.92) protein is Ketol-acid reductoisomerase (NADP(+)).